Here is a 288-residue protein sequence, read N- to C-terminus: Energy-coupling factor transporter ATP-binding protein EcfA2 (288 aa).

The 243-residue stretch at 3–245 folds into the ABC transporter domain; sequence IKIENLTHVY…VDTLESVGLA (243 aa). Residue 40 to 47 participates in ATP binding; it reads GHTGSGKS.

This sequence belongs to the ABC transporter superfamily. Energy-coupling factor EcfA family. Forms a stable energy-coupling factor (ECF) transporter complex composed of 2 membrane-embedded substrate-binding proteins (S component), 2 ATP-binding proteins (A component) and 2 transmembrane proteins (T component).

Its subcellular location is the cell membrane. In terms of biological role, ATP-binding (A) component of a common energy-coupling factor (ECF) ABC-transporter complex. Unlike classic ABC transporters this ECF transporter provides the energy necessary to transport a number of different substrates. This chain is Energy-coupling factor transporter ATP-binding protein EcfA2, found in Clostridium tetani (strain Massachusetts / E88).